We begin with the raw amino-acid sequence, 59 residues long: Large ribosomal subunit protein bL32c (59 aa).

Residues 1 to 19 are compositionally biased toward basic residues; sequence MAVPKKRTSKAKKNARKAN. Residues 1 to 24 are disordered; the sequence is MAVPKKRTSKAKKNARKANWKNQA.

The protein belongs to the bacterial ribosomal protein bL32 family.

The protein resides in the plastid. It localises to the chloroplast. This chain is Large ribosomal subunit protein bL32c (rpl32), found in Porphyra purpurea (Red seaweed).